The primary structure comprises 387 residues: Eukaryotic translation initiation factor 3 subunit M (387 aa).

A PCI domain is found at 181–340; sequence RSSKVMIELL…RKVHISSTMH (160 aa).

This sequence belongs to the eIF-3 subunit M family. Component of the eukaryotic translation initiation factor 3 (eIF-3) complex. The eIF-3 complex interacts with pix.

It localises to the cytoplasm. The protein resides in the golgi apparatus. In terms of biological role, component of the eukaryotic translation initiation factor 3 (eIF-3) complex, which is involved in protein synthesis of a specialized repertoire of mRNAs and, together with other initiation factors, stimulates binding of mRNA and methionyl-tRNAi to the 40S ribosome. The eIF-3 complex specifically targets and initiates translation of a subset of mRNAs involved in cell proliferation. In Drosophila willistoni (Fruit fly), this protein is Eukaryotic translation initiation factor 3 subunit M.